Consider the following 213-residue polypeptide: Peptide methionine sulfoxide reductase MsrA (213 aa).

The active site involves Cys53.

It belongs to the MsrA Met sulfoxide reductase family.

It carries out the reaction L-methionyl-[protein] + [thioredoxin]-disulfide + H2O = L-methionyl-(S)-S-oxide-[protein] + [thioredoxin]-dithiol. The catalysed reaction is [thioredoxin]-disulfide + L-methionine + H2O = L-methionine (S)-S-oxide + [thioredoxin]-dithiol. Has an important function as a repair enzyme for proteins that have been inactivated by oxidation. Catalyzes the reversible oxidation-reduction of methionine sulfoxide in proteins to methionine. This Serratia proteamaculans (strain 568) protein is Peptide methionine sulfoxide reductase MsrA.